The sequence spans 143 residues: Large ribosomal subunit protein uL11 (143 aa).

This sequence belongs to the universal ribosomal protein uL11 family. As to quaternary structure, part of the ribosomal stalk of the 50S ribosomal subunit. Interacts with L10 and the large rRNA to form the base of the stalk. L10 forms an elongated spine to which L12 dimers bind in a sequential fashion forming a multimeric L10(L12)X complex. One or more lysine residues are methylated.

Its function is as follows. Forms part of the ribosomal stalk which helps the ribosome interact with GTP-bound translation factors. The protein is Large ribosomal subunit protein uL11 of Koribacter versatilis (strain Ellin345).